The following is a 623-amino-acid chain: Keratin, type I cytoskeletal 9 (623 aa).

Residues 1–13 (MSCRQFSSSYLSR) show a composition bias toward low complexity. The segment at 1–25 (MSCRQFSSSYLSRSGGGGGGGLGSG) is disordered. Residues 1–152 (MSCRQFSSSY…GGDGGILTAN (152 aa)) are head. Phosphoserine occurs at positions 14 and 57. Gly residues predominate over residues 14-25 (SGGGGGGGLGSG). The tract at residues 153–188 (EKSTMQELNSRLASYLDKVQALEEANNDLENKIQDW) is coil 1A. Positions 153 to 465 (EKSTMQELNS…NLLEGGQEDF (313 aa)) constitute an IF rod domain. Positions 189–207 (YDKKGPAAIQKNYSPYYNT) are linker 1. Residues 208–299 (IDDLKDQIVD…KNHKEEMSQL (92 aa)) are coil 1B. Residues 300-322 (TGQNSGDVNVEINVAPGKDLTKT) are linker 12. Positions 323-461 (LNDMRQEYEQ…ETYHNLLEGG (139 aa)) are coil 2. Disordered stretches follow at residues 462 to 496 (QEDF…SGGS) and 534 to 623 (YGGG…SSHS). The tract at residues 462–623 (QEDFESSGAG…GGGSGKSSHS (162 aa)) is tail. Gly residues predominate over residues 471–496 (GKIGLGGRGGSGGSYGRGSRGGSGGS).

Belongs to the intermediate filament family. As to quaternary structure, heterotetramer of two type I and two type II keratins. In terms of tissue distribution, expressed in the terminally differentiated epidermis of palms and soles.

May serve an important special function either in the mature palmar and plantar skin tissue or in the morphogenetic program of the formation of these tissues. Plays a role in keratin filament assembly. The protein is Keratin, type I cytoskeletal 9 (KRT9) of Homo sapiens (Human).